Here is a 127-residue protein sequence, read N- to C-terminus: Fluoride-specific ion channel FluC (127 aa).

Helical transmembrane passes span 7-27, 37-57, 69-89, and 102-122; these read LILI…MGLI, FGTL…MAMI, LFMI…SAEV, and LGIM…GVLI. The Na(+) site is built by Gly-77 and Thr-80.

Belongs to the fluoride channel Fluc/FEX (TC 1.A.43) family.

Its subcellular location is the cell inner membrane. The catalysed reaction is fluoride(in) = fluoride(out). With respect to regulation, na(+) is not transported, but it plays an essential structural role and its presence is essential for fluoride channel function. Its function is as follows. Fluoride-specific ion channel. Important for reducing fluoride concentration in the cell, thus reducing its toxicity. This is Fluoride-specific ion channel FluC from Mannheimia succiniciproducens (strain KCTC 0769BP / MBEL55E).